The sequence spans 166 residues: Large ribosomal subunit protein uL10 (166 aa).

Belongs to the universal ribosomal protein uL10 family. As to quaternary structure, part of the ribosomal stalk of the 50S ribosomal subunit. The N-terminus interacts with L11 and the large rRNA to form the base of the stalk. The C-terminus forms an elongated spine to which L12 dimers bind in a sequential fashion forming a multimeric L10(L12)X complex.

In terms of biological role, forms part of the ribosomal stalk, playing a central role in the interaction of the ribosome with GTP-bound translation factors. This is Large ribosomal subunit protein uL10 from Ureaplasma parvum serovar 3 (strain ATCC 27815 / 27 / NCTC 11736).